The following is a 196-amino-acid chain: Probable malonic semialdehyde reductase RutE (196 aa).

The protein belongs to the nitroreductase family. HadB/RutE subfamily. The cofactor is FMN.

The enzyme catalyses 3-hydroxypropanoate + NADP(+) = 3-oxopropanoate + NADPH + H(+). May reduce toxic product malonic semialdehyde to 3-hydroxypropionic acid, which is excreted. In Shigella flexneri serotype 5b (strain 8401), this protein is Probable malonic semialdehyde reductase RutE.